Here is a 201-residue protein sequence, read N- to C-terminus: Probable molybdenum cofactor guanylyltransferase (201 aa).

Residues 20 to 22 (LAG), K32, D77, and D106 contribute to the GTP site. D106 contributes to the Mg(2+) binding site.

This sequence belongs to the MobA family. It depends on Mg(2+) as a cofactor.

The protein resides in the cytoplasm. The enzyme catalyses Mo-molybdopterin + GTP + H(+) = Mo-molybdopterin guanine dinucleotide + diphosphate. Functionally, transfers a GMP moiety from GTP to Mo-molybdopterin (Mo-MPT) cofactor (Moco or molybdenum cofactor) to form Mo-molybdopterin guanine dinucleotide (Mo-MGD) cofactor. This chain is Probable molybdenum cofactor guanylyltransferase, found in Aquifex aeolicus (strain VF5).